The sequence spans 325 residues: NADH-quinone oxidoreductase subunit H (325 aa).

8 helical membrane-spanning segments follow: residues 11-31 (ILLT…CGAF), 81-101 (VIFT…FAIV), 114-134 (IGIL…LFAG), 154-174 (LSYE…AGSF), 186-206 (VWNV…GVAV), 237-257 (FFVG…TLFF), 265-285 (LPPF…FILI), and 304-324 (ICLP…LWQA).

It belongs to the complex I subunit 1 family. As to quaternary structure, NDH-1 is composed of 13 different subunits. Subunits NuoA, H, J, K, L, M, N constitute the membrane sector of the complex.

Its subcellular location is the cell inner membrane. It catalyses the reaction a quinone + NADH + 5 H(+)(in) = a quinol + NAD(+) + 4 H(+)(out). NDH-1 shuttles electrons from NADH, via FMN and iron-sulfur (Fe-S) centers, to quinones in the respiratory chain. The immediate electron acceptor for the enzyme in this species is believed to be ubiquinone. Couples the redox reaction to proton translocation (for every two electrons transferred, four hydrogen ions are translocated across the cytoplasmic membrane), and thus conserves the redox energy in a proton gradient. This subunit may bind ubiquinone. The polypeptide is NADH-quinone oxidoreductase subunit H (Escherichia coli O45:K1 (strain S88 / ExPEC)).